Consider the following 130-residue polypeptide: Lipoprotein LpqS (130 aa).

The N-terminal stretch at 1–23 is a signal peptide; sequence MVWMRSAIVAVALGVTVAAVAAA. Residue Cys24 is the site of N-palmitoyl cysteine attachment. Cys24 is lipidated: S-diacylglycerol cysteine.

It localises to the cell membrane. In terms of biological role, may play an essential role in M.tuberculosis replication and survival inside the host cell. The sequence is that of Lipoprotein LpqS from Mycobacterium tuberculosis (strain ATCC 25618 / H37Rv).